Here is a 227-residue protein sequence, read N- to C-terminus: MFQEYLSVIVKGIPTSLLLTVVSLLIAFFLALFLTFLLSMENKWIKSAVNLYLTLFTGTPLLVQFFLIYAGPGQFQWIIDSPLWYVLSNAWFCAALALALNSAAYSTQLFHGAVKAIPKGQWESCGALGLNRIQTLKILIPYALKRALPSYSNEIILVFKGTALASTITIMDIMGYARQLYGTEYDALTIYGIAGGIYLIITGIATLLLRKLEKKVLAFERFEVSKA.

An ABC transmembrane type-1 domain is found at 13-209 (IPTSLLLTVV…IITGIATLLL (197 aa)). The next 5 membrane-spanning stretches (helical) occupy residues 17–37 (LLLTVVSLLIAFFLALFLTFL), 51–71 (LYLTLFTGTPLLVQFFLIYAG), 78–98 (IIDSPLWYVLSNAWFCAALAL), 155–175 (IILVFKGTALASTITIMDIMG), and 188–208 (LTIYGIAGGIYLIITGIATLL).

This sequence belongs to the binding-protein-dependent transport system permease family. HisMQ subfamily. In terms of assembly, the complex is composed of two ATP-binding proteins (ArtP), two transmembrane proteins (ArtM and ArtQ) and a solute-binding protein (ArtI).

It localises to the cell inner membrane. In terms of biological role, part of the ABC transporter complex ArtPIQM involved in arginine transport. Probably responsible for the translocation of the substrate across the membrane. The protein is Arginine ABC transporter permease protein ArtM (artM) of Haemophilus influenzae (strain ATCC 51907 / DSM 11121 / KW20 / Rd).